Here is a 219-residue protein sequence, read N- to C-terminus: Ion-translocating oxidoreductase complex subunit G (219 aa).

A helical transmembrane segment spans residues 25–45 (GLLLGLFSLVSALMLALASDA). FMN phosphoryl threonine is present on Thr-187.

It belongs to the RnfG family. In terms of assembly, the complex is composed of six subunits: RnfA, RnfB, RnfC, RnfD, RnfE and RnfG. FMN is required as a cofactor.

Its subcellular location is the cellular chromatophore membrane. In terms of biological role, part of a membrane-bound complex that couples electron transfer with translocation of ions across the membrane. This is Ion-translocating oxidoreductase complex subunit G from Cereibacter sphaeroides (strain ATCC 17029 / ATH 2.4.9) (Rhodobacter sphaeroides).